A 312-amino-acid polypeptide reads, in one-letter code: tRNA pseudouridine synthase B (312 aa).

Asp48 (nucleophile) is an active-site residue.

This sequence belongs to the pseudouridine synthase TruB family. Type 1 subfamily.

It catalyses the reaction uridine(55) in tRNA = pseudouridine(55) in tRNA. Functionally, responsible for synthesis of pseudouridine from uracil-55 in the psi GC loop of transfer RNAs. In Haemophilus influenzae (strain ATCC 51907 / DSM 11121 / KW20 / Rd), this protein is tRNA pseudouridine synthase B.